We begin with the raw amino-acid sequence, 359 residues long: Peptide chain release factor 1 (359 aa).

N5-methylglutamine is present on Gln-236.

This sequence belongs to the prokaryotic/mitochondrial release factor family. Post-translationally, methylated by PrmC. Methylation increases the termination efficiency of RF1.

The protein resides in the cytoplasm. Peptide chain release factor 1 directs the termination of translation in response to the peptide chain termination codons UAG and UAA. In Streptococcus pyogenes serotype M1, this protein is Peptide chain release factor 1.